An 83-amino-acid chain; its full sequence is U2-hexatoxin-Hi1a (83 aa).

Residues 1–23 (MRNTTFLVLNVMLLVSVALFCAA) form the signal peptide. A propeptide spanning residues 24–45 (DPEMEKSSFAEILDTGNPEQER) is cleaved from the precursor. 4 disulfide bridges follow: Cys47–Cys63, Cys54–Cys68, Cys62–Cys78, and Cys70–Cys76.

This sequence belongs to the neurotoxin 07 (Beta/delta-agtx) family. In terms of tissue distribution, expressed by the venom gland.

It is found in the secreted. Inhibits sodium channels (Nav) of insects. This chain is U2-hexatoxin-Hi1a, found in Hadronyche infensa (Fraser island funnel-web spider).